The following is a 701-amino-acid chain: Rab-like protein 6 (701 aa).

The residue at position 1 (M1) is an N-acetylmethionine. Residues 39–279 (GVQYNMKIVI…IFLEMMEARS (241 aa)) form a small GTPase-like region. Residues 50-57 (GDRNTGKT), 100-104 (DVVDK), and 177-179 (YRD) each bind GTP. The segment at 279 to 701 (SRGHASPLTT…LRGGGDYEAL (423 aa)) is disordered. The span at 284–315 (SPLTTSGQSPSSGSQSPVVPPSTVSTGSSSPS) shows a compositional bias: low complexity. The segment covering 316–344 (TPQPVLQPPLQAPPAPPAPAEAPPLPAAP) has biased composition (pro residues). Phosphoserine is present on residues S394, S416, S418, S461, and S462. Residues 495–506 (ALGPPRDAAPRA) are compositionally biased toward low complexity. S552 carries the phosphoserine modification. The segment covering 555-569 (DAQRRAGEFPVREDL) has biased composition (basic and acidic residues). S570 bears the Phosphoserine mark. Position 573 is a phosphothreonine (T573). The segment covering 580–589 (VQPPAPPKPL) has biased composition (pro residues). Positions 608–626 (EPGREDSSEQDKEGRPPAK) are enriched in basic and acidic residues. S614 and S615 each carry phosphoserine. The interaction with CDKN2A stretch occupies residues 629–667 (KKKKKKGREEEDKAAKKRSKHKKSRERADDKGRDERRRR). A compositionally biased stretch (basic residues) spans 643 to 653 (AKKRSKHKKSR). The span at 654–665 (ERADDKGRDERR) shows a compositional bias: basic and acidic residues. Residues 683–701 (LGGGAPSGPLRGGGDYEAL) are compositionally biased toward gly residues.

It belongs to the small GTPase superfamily. Rab family.

The protein localises to the nucleus. It is found in the cytoplasm. Its function is as follows. May enhance cellular proliferation. May reduce growth inhibitory activity of CDKN2A. This Bos taurus (Bovine) protein is Rab-like protein 6 (RABL6).